Here is a 335-residue protein sequence, read N- to C-terminus: LIM and SH3 domain protein F42H10.3 (335 aa).

The LIM zinc-binding domain occupies 5–65 (CAREDCGKTV…DPHYPKTVAS (61 aa)). Nebulin repeat units lie at residues 66–97 (VMAD…KMKG) and 98–132 (TKIE…QKAR). The span at 128-142 (DQKARQEEVRPKEEI) shows a compositional bias: basic and acidic residues. Disordered stretches follow at residues 128 to 151 (DQKA…PTPI) and 233 to 264 (DFAG…ISPT). The segment covering 242–260 (SNSISSTSPHSTLSSPQST) has biased composition (low complexity). In terms of domain architecture, SH3 spans 266 to 327 (KAGFAVKAIY…PANYVQPHKL (62 aa)).

The chain is LIM and SH3 domain protein F42H10.3 from Caenorhabditis elegans.